The following is a 573-amino-acid chain: Arginine--tRNA ligase (573 aa).

The short motif at 122–132 (PNLAKEMHVGH) is the 'HIGH' region element.

Belongs to the class-I aminoacyl-tRNA synthetase family. As to quaternary structure, monomer.

Its subcellular location is the cytoplasm. The enzyme catalyses tRNA(Arg) + L-arginine + ATP = L-arginyl-tRNA(Arg) + AMP + diphosphate. This Laribacter hongkongensis (strain HLHK9) protein is Arginine--tRNA ligase.